Consider the following 163-residue polypeptide: Nucleotide-binding protein GK0742 (163 aa).

This sequence belongs to the YajQ family.

In terms of biological role, nucleotide-binding protein. The protein is Nucleotide-binding protein GK0742 of Geobacillus kaustophilus (strain HTA426).